Here is a 181-residue protein sequence, read N- to C-terminus: Alkyl hydroperoxide reductase AhpD (181 aa).

Cysteine 131 (proton donor) is an active-site residue. Cysteine 131 and cysteine 134 are oxidised to a cystine. Catalysis depends on cysteine 134, which acts as the Cysteine sulfenic acid (-SOH) intermediate.

Belongs to the AhpD family.

It catalyses the reaction N(6)-[(R)-dihydrolipoyl]-L-lysyl-[lipoyl-carrier protein] + a hydroperoxide = N(6)-[(R)-lipoyl]-L-lysyl-[lipoyl-carrier protein] + an alcohol + H2O. In terms of biological role, antioxidant protein with alkyl hydroperoxidase activity. Required for the reduction of the AhpC active site cysteine residues and for the regeneration of the AhpC enzyme activity. This chain is Alkyl hydroperoxide reductase AhpD, found in Azorhizobium caulinodans (strain ATCC 43989 / DSM 5975 / JCM 20966 / LMG 6465 / NBRC 14845 / NCIMB 13405 / ORS 571).